A 239-amino-acid chain; its full sequence is Increased recombination centers protein 22-2 (239 aa).

The signal sequence occupies residues 1–19 (MKLSTIFTAFAATIATVAG). At 20–161 (YETTGSKQTV…AAVSFFDPRL (142 aa)) the chain is on the lumenal side. A helical transmembrane segment spans residues 162 to 182 (IFLELVLLITFAGLIYVGYEI). Residues 183 to 239 (WGKQYFKGVAPVKAKKVSAAKASSPVATGPSTTSATGYDTNWIPESHLKQKKTKKVN) are Cytoplasmic-facing. The segment at 202–222 (AKASSPVATGPSTTSATGYDT) is disordered. The segment covering 211 to 221 (GPSTTSATGYD) has biased composition (polar residues).

The protein belongs to the IRC22 family.

The protein resides in the endoplasmic reticulum membrane. Its function is as follows. Is probably involved in a pathway contributing to genomic integrity. This chain is Increased recombination centers protein 22-2 (IRC22-2), found in Candida albicans (strain SC5314 / ATCC MYA-2876) (Yeast).